Here is a 352-residue protein sequence, read N- to C-terminus: Phosphate acyltransferase (352 aa).

Positions glutamate 328–glycine 339 are enriched in basic and acidic residues. The interval glutamate 328 to serine 352 is disordered.

Belongs to the PlsX family. Homodimer. Probably interacts with PlsY.

The protein resides in the cytoplasm. It catalyses the reaction a fatty acyl-[ACP] + phosphate = an acyl phosphate + holo-[ACP]. It functions in the pathway lipid metabolism; phospholipid metabolism. Its function is as follows. Catalyzes the reversible formation of acyl-phosphate (acyl-PO(4)) from acyl-[acyl-carrier-protein] (acyl-ACP). This enzyme utilizes acyl-ACP as fatty acyl donor, but not acyl-CoA. In Geobacter sp. (strain M21), this protein is Phosphate acyltransferase.